A 303-amino-acid polypeptide reads, in one-letter code: Mycothiol acetyltransferase (303 aa).

A 1D-myo-inositol 2-(L-cysteinylamino)-2-deoxy-alpha-D-glucopyranoside-binding site is contributed by D33. Residues 78–80 and 86–91 contribute to the acetyl-CoA site; these read VVV and RRGTGS. Residues 150-303 form the N-acetyltransferase domain; sequence VRFATYSGPH…AYAAVAPTDV (154 aa). Residues E177, K218, and E226 each coordinate 1D-myo-inositol 2-(L-cysteinylamino)-2-deoxy-alpha-D-glucopyranoside. Residue 230-232 coordinates acetyl-CoA; sequence VGV. A 1D-myo-inositol 2-(L-cysteinylamino)-2-deoxy-alpha-D-glucopyranoside-binding site is contributed by Y269. 274-279 is a binding site for acetyl-CoA; the sequence is NTAAVK.

This sequence belongs to the acetyltransferase family. MshD subfamily. In terms of assembly, monomer.

The enzyme catalyses 1D-myo-inositol 2-(L-cysteinylamino)-2-deoxy-alpha-D-glucopyranoside + acetyl-CoA = mycothiol + CoA + H(+). In terms of biological role, catalyzes the transfer of acetyl from acetyl-CoA to desacetylmycothiol (Cys-GlcN-Ins) to form mycothiol. This Mycolicibacterium gilvum (strain PYR-GCK) (Mycobacterium gilvum (strain PYR-GCK)) protein is Mycothiol acetyltransferase.